A 484-amino-acid chain; its full sequence is Carbohydrate sulfotransferase 7 (484 aa).

The Cytoplasmic portion of the chain corresponds to 1-12 (MKGRRRRRREYC). A helical; Signal-anchor for type II membrane protein membrane pass occupies residues 13–33 (KFTLLLALYTLLLLLVPSVLD). Topologically, residues 34 to 484 (SHSEQDKGRN…PLETKANWAV (451 aa)) are lumenal. The interval 71-90 (RSLAEGNPDRSPGSPGNLSA) is disordered. N-linked (GlcNAc...) asparagine glycosylation is present at N87. A 3'-phosphoadenylyl sulfate-binding site is contributed by 108–114 (WRTGSSF). N-linked (GlcNAc...) asparagine glycosylation occurs at N184. A 3'-phosphoadenylyl sulfate-binding site is contributed by 276 to 284 (RDPRAVHNS). The N-linked (GlcNAc...) asparagine glycan is linked to N405. A Phosphoserine modification is found at S460. The segment covering 460 to 473 (SGDERDRKTVREGE) has biased composition (basic and acidic residues). Residues 460–484 (SGDERDRKTVREGETPLETKANWAV) are disordered.

Belongs to the sulfotransferase 1 family. Gal/GlcNAc/GalNAc subfamily. Widely expressed. Highly expressed in kidney. Expressed at lower level in heart, lung and liver.

Its subcellular location is the golgi apparatus membrane. It catalyses the reaction chondroitin beta-D-glucuronate + n 3'-phosphoadenylyl sulfate = chondroitin 6'-sulfate + n adenosine 3',5'-bisphosphate + n H(+). Its function is as follows. Sulfotransferase that utilizes 3'-phospho-5'-adenylyl sulfate (PAPS) as sulfonate donor to catalyze the transfer of sulfate to position 6 of non-reducing N-acetylglucosamine (GlcNAc) residues. Preferentially acts on mannose-linked GlcNAc. Also able to catalyze the transfer of sulfate to position 6 of the N-acetylgalactosamine (GalNAc) residue of chondroitin. Also acts on core 2 mucin-type oligosaccharide and N-acetyllactosamine oligomer with a lower efficiency. Has weak or no activity toward keratan sulfate and oligosaccharides containing the Galbeta1-4GlcNAc. Catalyzes 6-O-sulfation of beta-benzyl GlcNAc but not alpha- or beta-benzyl GalNAc. This Mus musculus (Mouse) protein is Carbohydrate sulfotransferase 7 (Chst7).